Reading from the N-terminus, the 349-residue chain is Guanine nucleotide-binding protein alpha-13 subunit (349 aa).

The N-myristoyl glycine moiety is linked to residue Gly-2. Cys-3 carries the S-palmitoyl cysteine lipid modification. The G-alpha domain maps to 35-349 (SHIRLLLLGS…VFKDIMKRKR (315 aa)). Positions 38 to 51 (RLLLLGSAESGKTT) are G1 motif. GTP-binding positions include 43 to 50 (GSAESGKT), 177 to 183 (IMAYVPT), 202 to 206 (DIGGQ), 271 to 274 (NEID), and Ala-327. Positions 175 to 183 (DLIMAYVPT) are G2 motif. Residue Thr-183 participates in Mg(2+) binding. Residues 198–207 (FQLFDIGGQK) form a G3 motif region. Residues 267–274 (YLFLNEID) are G4 motif. Residues 325 to 330 (CIAIDT) are G5 motif.

This sequence belongs to the G-alpha family. As to quaternary structure, g proteins are composed of 3 units; alpha, beta and gamma. The alpha chain contains the guanine nucleotide binding site.

Its function is as follows. Guanine nucleotide-binding proteins (G proteins) are involved as modulators or transducers in various transmembrane signaling systems. This is Guanine nucleotide-binding protein alpha-13 subunit from Caenorhabditis briggsae.